The sequence spans 201 residues: MELVVKDVQNVLSVSEIIFARDFNEALIHQVVIAYSASTRQGTRAQKSRAEVSGSGRKPWRQKGTGRARAGSFRSPIWRSGGVTFAAKPQEHSQKVNKKMYRGALKSIFSELIRQKRLIVFENFSLNAPKTKLLVQKLKDINLKNVLIVTNKIDNNLFLASRNLYSVDVKDVHSIDPVSLIAFDHVVITVEAVKRIEEILS.

Residues 44–68 are disordered; it reads RAQKSRAEVSGSGRKPWRQKGTGRA.

This sequence belongs to the universal ribosomal protein uL4 family. Part of the 50S ribosomal subunit.

In terms of biological role, one of the primary rRNA binding proteins, this protein initially binds near the 5'-end of the 23S rRNA. It is important during the early stages of 50S assembly. It makes multiple contacts with different domains of the 23S rRNA in the assembled 50S subunit and ribosome. Functionally, forms part of the polypeptide exit tunnel. The polypeptide is Large ribosomal subunit protein uL4 (Buchnera aphidicola subsp. Acyrthosiphon pisum (strain 5A)).